The following is a 288-amino-acid chain: Proteasome assembly chaperone 1 (288 aa).

The residue at position 2 (Ala2) is an N-acetylalanine. The interval 12–38 (TPCRAGTEEEEEEEDGNRETPEDREVR) is disordered. Thr18 bears the Phosphothreonine mark. A compositionally biased stretch (basic and acidic residues) spans 28–38 (NRETPEDREVR). Position 54 is a phosphothreonine (Thr54). Phosphoserine is present on Ser180. An N6-acetyllysine modification is found at Lys264.

Belongs to the PSMG1 family. Forms a heterodimer with PSMG2. The PSMG1-PSMG2 heterodimer interacts directly with the PSMA5 and PSMA7 proteasome alpha subunits. Post-translationally, degraded by the proteasome upon completion of 20S proteasome maturation.

The protein resides in the cytoplasm. It is found in the endoplasmic reticulum. Its function is as follows. Chaperone protein which promotes assembly of the 20S proteasome as part of a heterodimer with PSMG2. The PSMG1-PSMG2 heterodimer binds to the PSMA5 and PSMA7 proteasome subunits, promotes assembly of the proteasome alpha subunits into the heteroheptameric alpha ring and prevents alpha ring dimerization. The sequence is that of Proteasome assembly chaperone 1 from Bos taurus (Bovine).